Here is a 583-residue protein sequence, read N- to C-terminus: Proline--tRNA ligase (583 aa).

The protein belongs to the class-II aminoacyl-tRNA synthetase family. ProS type 1 subfamily. In terms of assembly, homodimer.

The protein localises to the cytoplasm. It catalyses the reaction tRNA(Pro) + L-proline + ATP = L-prolyl-tRNA(Pro) + AMP + diphosphate. Its function is as follows. Catalyzes the attachment of proline to tRNA(Pro) in a two-step reaction: proline is first activated by ATP to form Pro-AMP and then transferred to the acceptor end of tRNA(Pro). As ProRS can inadvertently accommodate and process non-cognate amino acids such as alanine and cysteine, to avoid such errors it has two additional distinct editing activities against alanine. One activity is designated as 'pretransfer' editing and involves the tRNA(Pro)-independent hydrolysis of activated Ala-AMP. The other activity is designated 'posttransfer' editing and involves deacylation of mischarged Ala-tRNA(Pro). The misacylated Cys-tRNA(Pro) is not edited by ProRS. In Acidothermus cellulolyticus (strain ATCC 43068 / DSM 8971 / 11B), this protein is Proline--tRNA ligase.